The following is a 135-amino-acid chain: Small ribosomal subunit protein uS12 (135 aa).

A 3-methylthioaspartic acid modification is found at D89. The tract at residues 106–135 (GVKDRKQGRSKYGAKRPKPGQAPAAAGKKK) is disordered. The span at 113-123 (GRSKYGAKRPK) shows a compositional bias: basic residues. Over residues 124–135 (PGQAPAAAGKKK) the composition is skewed to low complexity.

The protein belongs to the universal ribosomal protein uS12 family. In terms of assembly, part of the 30S ribosomal subunit. Contacts proteins S8 and S17. May interact with IF1 in the 30S initiation complex.

With S4 and S5 plays an important role in translational accuracy. Its function is as follows. Interacts with and stabilizes bases of the 16S rRNA that are involved in tRNA selection in the A site and with the mRNA backbone. Located at the interface of the 30S and 50S subunits, it traverses the body of the 30S subunit contacting proteins on the other side and probably holding the rRNA structure together. The combined cluster of proteins S8, S12 and S17 appears to hold together the shoulder and platform of the 30S subunit. The chain is Small ribosomal subunit protein uS12 from Synechococcus sp. (strain JA-3-3Ab) (Cyanobacteria bacterium Yellowstone A-Prime).